Here is a 114-residue protein sequence, read N- to C-terminus: uncharacterized protein (114 aa).

This is an uncharacterized protein from Sputnik virophage.